The chain runs to 33 residues: Protein YtiC (33 aa).

A helical membrane pass occupies residues Phe-10–Leu-29.

The protein localises to the cell inner membrane. The sequence is that of Protein YtiC from Escherichia coli (strain K12).